A 227-amino-acid polypeptide reads, in one-letter code: PKHD-type hydroxylase Patl_2273 (227 aa).

The Fe2OG dioxygenase domain occupies 78 to 178 (KIYPPKFNRY…RTASFFWIES (101 aa)). Fe cation is bound by residues H96, D98, and H159. Residue R169 participates in 2-oxoglutarate binding.

The cofactor is Fe(2+). It depends on L-ascorbate as a cofactor.

This Pseudoalteromonas atlantica (strain T6c / ATCC BAA-1087) protein is PKHD-type hydroxylase Patl_2273.